Reading from the N-terminus, the 502-residue chain is Bone morphogenetic protein receptor type-1B (502 aa).

Over residues 1–10 (MPLLSSSKLS) the composition is skewed to polar residues. Residues 1–13 (MPLLSSSKLSMES) form the signal peptide. Residues 1 to 27 (MPLLSSSKLSMESRKEDSEGTAPAPPQ) form a disordered region. The Extracellular portion of the chain corresponds to 14-126 (RKEDSEGTAP…DFAEGNIHHK (113 aa)). 5 cysteine pairs are disulfide-bonded: Cys32/Cys53, Cys34/Cys38, Cys47/Cys71, Cys81/Cys95, and Cys96/Cys102. The N-linked (GlcNAc...) asparagine glycan is linked to Asn44. A helical transmembrane segment spans residues 127–148 (ALLISVTVCSILLVLIIIFCYF). At 149 to 502 (RYKRQEARPR…KMSESQDIKL (354 aa)) the chain is on the cytoplasmic side. One can recognise a GS domain in the interval 174–203 (ESLKDLIEQSQSSGSGSGLPLLVQRTIAKQ). Residues 204–494 (IQMVKQIGKG…LRVKKTLAKM (291 aa)) form the Protein kinase domain. ATP contacts are provided by residues 210-218 (IGKGRYGEV) and Lys231. The active-site Proton acceptor is the Asp332.

It belongs to the protein kinase superfamily. TKL Ser/Thr protein kinase family. TGFB receptor subfamily. Mg(2+) serves as cofactor. The cofactor is Mn(2+). Post-translationally, autophosphorylated.

It is found in the cell membrane. The catalysed reaction is L-threonyl-[receptor-protein] + ATP = O-phospho-L-threonyl-[receptor-protein] + ADP + H(+). The enzyme catalyses L-seryl-[receptor-protein] + ATP = O-phospho-L-seryl-[receptor-protein] + ADP + H(+). Functionally, on ligand binding, forms a receptor complex consisting of two type II and two type I transmembrane serine/threonine kinases. Type II receptors phosphorylate and activate type I receptors which autophosphorylate, then bind and activate SMAD transcription. Positively regulates chondrocyte differentiation. The sequence is that of Bone morphogenetic protein receptor type-1B (BMPR1B) from Gallus gallus (Chicken).